We begin with the raw amino-acid sequence, 211 residues long: Small ribosomal subunit protein eS1 (211 aa).

The disordered stretch occupies residues 192–211 (NGLPPYEAVGDRATPELASY).

The protein belongs to the eukaryotic ribosomal protein eS1 family.

In Methanopyrus kandleri (strain AV19 / DSM 6324 / JCM 9639 / NBRC 100938), this protein is Small ribosomal subunit protein eS1.